Here is a 503-residue protein sequence, read N- to C-terminus: Poxin-Schlafen (503 aa).

Histidine 15 serves as the catalytic Proton donor. The active-site Shared with catalytic histidine of dimeric partner is the tyrosine 136. Lysine 140 functions as the Proton acceptor; shared with catalytic histidine of dimeric partner in the catalytic mechanism.

This sequence in the N-terminal section; belongs to the poxin family. The protein in the C-terminal section; belongs to the Schlafen protein family. Subgroup poxviridae B3 subfamily. As to quaternary structure, homodimer.

It catalyses the reaction 2',3'-cGAMP + H2O = Gp(2'-5')Ap(3') + H(+). In terms of biological role, nuclease that is responsible for viral evasion of host cGAS-STING innate immunity. Cleaves 2',3'-cGAMP which is produced by host cGAS following recognition of cytosolic DNA and blocks the subsequent 2',3'-cGAMP-mediated activation of TMEM173/STING, which normally spreads to adjacent cells and activates the interferon and NF-kappa-B immune responses. This Cynomys gunnisoni (Gunnison's prairie dog) protein is Poxin-Schlafen (OPG188).